A 310-amino-acid chain; its full sequence is p-hydroxybenzoic acid efflux pump subunit AaeA (310 aa).

Residues 12-32 (AITVILVILAFVAIFRAWVYY) form a helical membrane-spanning segment.

It belongs to the membrane fusion protein (MFP) (TC 8.A.1) family.

Its subcellular location is the cell inner membrane. Functionally, forms an efflux pump with AaeB. This Klebsiella pneumoniae (strain 342) protein is p-hydroxybenzoic acid efflux pump subunit AaeA.